A 41-amino-acid chain; its full sequence is Large ribosomal subunit protein bL36 (41 aa).

This sequence belongs to the bacterial ribosomal protein bL36 family.

The sequence is that of Large ribosomal subunit protein bL36 from Bartonella quintana (strain Toulouse) (Rochalimaea quintana).